The primary structure comprises 104 residues: L-rhamnose mutarotase (104 aa).

Residue Tyr18 participates in substrate binding. The active-site Proton donor is His22. Substrate-binding positions include Tyr41 and Trp76–Trp77.

The protein belongs to the rhamnose mutarotase family. In terms of assembly, homodimer.

The protein resides in the cytoplasm. It carries out the reaction alpha-L-rhamnose = beta-L-rhamnose. Its pathway is carbohydrate metabolism; L-rhamnose metabolism. In terms of biological role, involved in the anomeric conversion of L-rhamnose. This is L-rhamnose mutarotase from Escherichia coli O8 (strain IAI1).